A 321-amino-acid chain; its full sequence is Putrescine export system permease protein SapB (321 aa).

Residues 1–8 (MIIFTLRR) are Cytoplasmic-facing. Residues 9–29 (ILLLIVTLFLLTFVGFSLSYF) form a helical membrane-spanning segment. Residues 30–80 (TPHAPLQGASLWNAWVFWFNGLIHWDFGVSSINGQPIAEQLKEVFPATMEL) are Periplasmic-facing. The ABC transmembrane type-1 domain maps to 74–302 (FPATMELCIL…SLVIIVNVIS (229 aa)). A helical membrane pass occupies residues 81–101 (CILAFGFALIVGIPVGMIAGI). Over 102 to 112 (TRHKWQDNLIN) the chain is Cytoplasmic. A helical membrane pass occupies residues 113–133 (AIALLGFSIPVFWLALLLTLF). Residues 134 to 174 (CSLTLGWLPVSGRFDLLYEVKPITGFALIDAWLSDSPWRDE) are Periplasmic-facing. A helical transmembrane segment spans residues 175-195 (MIMSAIRHMILPVITLSVAPT). The Cytoplasmic segment spans residues 196 to 248 (TEVIRLMRISTIEVYDQNYVKAAATRGLSRFTILRRHVLHNALPPVIPRLGLQ). A helical transmembrane segment spans residues 249–269 (FSTMLTLAMITEMVFSWPGLG). Topologically, residues 270 to 280 (RWLINAIRQQD) are periplasmic. Residues 281 to 301 (YAAISAGVMVCGSLVIIVNVI) traverse the membrane as a helical segment. Residues 302-321 (SDILGAMANPLKHKEWYALR) lie on the Cytoplasmic side of the membrane.

The protein belongs to the binding-protein-dependent transport system permease family. OppBC subfamily.

The protein localises to the cell inner membrane. In terms of biological role, part of a putrescine export transport system, does not play a role in resistance to antimicrobial peptides. The polypeptide is Putrescine export system permease protein SapB (sapB) (Escherichia coli (strain K12)).